The chain runs to 215 residues: Dual specificity phosphatase 29 (215 aa).

The region spanning 53–201 (HVNEVWPRLH…LRELDKQLVK (149 aa)) is the Tyrosine-protein phosphatase domain. 145–152 (HCAMGRSR) is a substrate binding site. The active-site Phosphocysteine intermediate is cysteine 146.

Belongs to the protein-tyrosine phosphatase family. Non-receptor class dual specificity subfamily. Homodimer. Interacts with PRKAA2. In terms of tissue distribution, skeletal muscle, liver and adipose tissue.

The protein localises to the cytoplasm. It localises to the nucleus. It carries out the reaction O-phospho-L-tyrosyl-[protein] + H2O = L-tyrosyl-[protein] + phosphate. The catalysed reaction is O-phospho-L-seryl-[protein] + H2O = L-seryl-[protein] + phosphate. The enzyme catalyses O-phospho-L-threonyl-[protein] + H2O = L-threonyl-[protein] + phosphate. Its function is as follows. Dual specificity phosphatase able to dephosphorylate phosphotyrosine, phosphoserine and phosphothreonine residues within the same substrate, with a preference for phosphotyrosine as a substrate. Involved in the modulation of intracellular signaling cascades. In skeletal muscle regulates systemic glucose homeostasis by activating, AMPK, an energy sensor protein kinase. Affects MAP kinase signaling though modulation of the MAPK1/2 cascade in skeletal muscle promoting muscle cell differentiation, development and atrophy. The polypeptide is Dual specificity phosphatase 29 (Mus musculus (Mouse)).